The following is a 223-amino-acid chain: Class E basic helix-loop-helix protein 23 (223 aa).

Residues 32-93 form a disordered region; it reads PETTRGFGAS…GVAVDARRRP (62 aa). The 55-residue stretch at 98–152 folds into the bHLH domain; that stretch reads SLRLSINARERRRMHDLNDALDGLRAVIPYAHSPSVRKLSKIATLLLAKNYILMQ.

Expressed in brain and retina.

The protein resides in the nucleus. In terms of biological role, may function as transcriptional repressor. May modulate the expression of genes required for the differentiation and/or maintenance of pancreatic and neuronal cell types. May be important for rod bipolar cell maturation. The chain is Class E basic helix-loop-helix protein 23 (Bhlhe23) from Mus musculus (Mouse).